The following is a 233-amino-acid chain: Phosducin-like protein C2A9.09 (233 aa).

In terms of domain architecture, Phosducin spans 58 to 212 (EDEEDDEFLQ…DIAALKDPQN (155 aa)). Positions 86 to 233 (FGSVYPISKP…VNDDLDDDFD (148 aa)) are thioredoxin fold. Positions 207–233 (LKDPQNAEDELGKRDSSVNDDLDDDFD) are disordered. Phosphoserine occurs at positions 222 and 223. The segment covering 224-233 (VNDDLDDDFD) has biased composition (acidic residues).

Belongs to the phosducin family.

This chain is Phosducin-like protein C2A9.09, found in Schizosaccharomyces pombe (strain 972 / ATCC 24843) (Fission yeast).